A 164-amino-acid chain; its full sequence is Cyanate hydratase (164 aa).

Residues R90, E93, and S116 contribute to the active site.

This sequence belongs to the cyanase family.

The enzyme catalyses cyanate + hydrogencarbonate + 3 H(+) = NH4(+) + 2 CO2. Its function is as follows. Catalyzes the reaction of cyanate with bicarbonate to produce ammonia and carbon dioxide. The sequence is that of Cyanate hydratase from Ricinus communis (Castor bean).